Reading from the N-terminus, the 689-residue chain is MVVQLDQIHFFIFHEVLKIFKTMPQLFKTSKKIDELVINTIRFLSVDMVERAKSGHPGMPLGASHIVYLLYDRIMKYNPKNPNWFNRDRFILSAGHGSAMLYAAFYMFGFDLTLEDLKAFRQLNSKTPGHPEYGLTPGVEVTTGNLGQGFGNAVGMAMAEKFLSHYFNREGYPVIDHYTYVLVSDGDLMEGVSYEAASLAGHFKLNKLIAIWDNNHITIDGDTKLTWTEDVLKRFEALGWEVYHLEDGYNLDLLEETILKAKESDKPTFISVRTHIGYGTPLQDTPEVHGKPMGKEIVEETKKKFGWPLEEFYVPEEALNYTRRKVEEGKALEEEWNKLYAEYREKYPDLAQTLEKALNKEWSLDWLEKVEEFKEDMPTRKASGKVLNVMADYIPTMIGGSADLSESVNTVLKKYGDFEADTPTGRNVHYGVREHAMGTILNGMAYHGGILPYGGTFLIFSEYMRPAIRTAALANLQVIFVYSHDSIGLGEDGPTHQPVEQLWSLRSIPNLWVVRPADANEVKYAWEIALKRKNGPTAIILTRQKVKTIDRSKYASPEGVRKGAYVIADTEGKPDVVIIATGSEVQVALGAKEILEQKGIKTRVVNMACCELFEEQPEEYKREVLPPEVTKRVAVEAGRDTGWYKYVGSDGLVISLNEFGKSAPGSVLFEYYGFTPENVANKVIEKWFS.

Residue His56 participates in substrate binding. Thiamine diphosphate-binding positions include His96 and 144 to 146; that span reads GNL. Asp185 contributes to the Mg(2+) binding site. The thiamine diphosphate site is built by Gly186 and Asn215. The Mg(2+) site is built by Asn215 and Ile217. Residues His289, Arg380, and Ser407 each contribute to the substrate site. His289 contacts thiamine diphosphate. The Proton donor role is filled by Glu434. Phe460 provides a ligand contact to thiamine diphosphate. Substrate contacts are provided by His484, Asp492, and Arg543.

The protein belongs to the transketolase family. Homodimer. Requires Mg(2+) as cofactor. The cofactor is Ca(2+). Mn(2+) serves as cofactor. Co(2+) is required as a cofactor. It depends on thiamine diphosphate as a cofactor.

The catalysed reaction is D-sedoheptulose 7-phosphate + D-glyceraldehyde 3-phosphate = aldehydo-D-ribose 5-phosphate + D-xylulose 5-phosphate. In terms of biological role, catalyzes the transfer of a two-carbon ketol group from a ketose donor to an aldose acceptor, via a covalent intermediate with the cofactor thiamine pyrophosphate. This chain is Transketolase (tkt), found in Aquifex aeolicus (strain VF5).